A 238-amino-acid chain; its full sequence is Protein Iojap, chloroplastic (238 aa).

Residues 1 to 66 (MASSTGLTVA…KILTSLSNSR (66 aa)) constitute a chloroplast transit peptide.

Belongs to the Iojap/RsfS family. As to quaternary structure, interacts with chloroplast ribosomal protein uL14c (rpl14).

Its subcellular location is the plastid. It localises to the chloroplast. Its function is as follows. May be a ribosome silencing factor (Potential). Involved in plastid biogenesis. The sequence is that of Protein Iojap, chloroplastic (IJ) from Arabidopsis thaliana (Mouse-ear cress).